A 101-amino-acid chain; its full sequence is NADH-quinone oxidoreductase subunit K (101 aa).

3 consecutive transmembrane segments (helical) span residues 4-24 (LGHM…GIFL), 30-50 (IVLL…FVAF), and 62-82 (FVFF…AILV).

This sequence belongs to the complex I subunit 4L family. NDH-1 is composed of 14 different subunits. Subunits NuoA, H, J, K, L, M, N constitute the membrane sector of the complex.

The protein resides in the cell inner membrane. It carries out the reaction a quinone + NADH + 5 H(+)(in) = a quinol + NAD(+) + 4 H(+)(out). In terms of biological role, NDH-1 shuttles electrons from NADH, via FMN and iron-sulfur (Fe-S) centers, to quinones in the respiratory chain. The immediate electron acceptor for the enzyme in this species is believed to be ubiquinone. Couples the redox reaction to proton translocation (for every two electrons transferred, four hydrogen ions are translocated across the cytoplasmic membrane), and thus conserves the redox energy in a proton gradient. The sequence is that of NADH-quinone oxidoreductase subunit K from Stenotrophomonas maltophilia (strain R551-3).